The following is a 111-amino-acid chain: Large ribosomal subunit protein uL22 (111 aa).

Belongs to the universal ribosomal protein uL22 family. Part of the 50S ribosomal subunit.

This protein binds specifically to 23S rRNA; its binding is stimulated by other ribosomal proteins, e.g. L4, L17, and L20. It is important during the early stages of 50S assembly. It makes multiple contacts with different domains of the 23S rRNA in the assembled 50S subunit and ribosome. Its function is as follows. The globular domain of the protein is located near the polypeptide exit tunnel on the outside of the subunit, while an extended beta-hairpin is found that lines the wall of the exit tunnel in the center of the 70S ribosome. In Stenotrophomonas maltophilia (strain R551-3), this protein is Large ribosomal subunit protein uL22.